Reading from the N-terminus, the 287-residue chain is Serine/arginine-rich SC35-like splicing factor SCL33 (287 aa).

Residues 1 to 34 (MRGRSYTPSPPRGYGRRGRSPSPRGRYGGRSRDL) form a disordered region. Ser9 and Ser20 each carry phosphoserine. One can recognise an RRM domain in the interval 36 to 114 (TSLLVRNLRH…RELTVVFAEE (79 aa)). Basic and acidic residues predominate over residues 116-132 (RKKPTEMRARERGGGRF). A disordered region spans residues 116–287 (RKKPTEMRAR…QYDEDRSPSQ (172 aa)). Phosphoserine is present on residues Ser165, Ser175, Ser177, Ser188, and Ser190. Residues 177–187 (SPREERYDGRR) show a composition bias toward basic and acidic residues. Over residues 220-237 (SISRSPRRSRSPSPKRNR) the composition is skewed to basic residues. Phosphoserine occurs at positions 238, 248, 271, 284, and 286. Over residues 244-260 (SISRSPRRSRSPRRSRR) the composition is skewed to basic residues. Residues 278 to 287 (QYDEDRSPSQ) are compositionally biased toward basic and acidic residues.

It belongs to the splicing factor SR family. SCL subfamily. As to quaternary structure, component of the spliceosome. Homodimer. Interacts with AFC2, CYP59, RS2Z33, RNU1 and SR45. The interaction with AFC2 depends on phosphorylation status. Phosphorylated by AFC2. As to expression, ubiquitous. Mostly expressed in roots, fruits and flowers, and, to a lower extent, in leaves.

It is found in the nucleus speckle. It localises to the nucleus. Its subcellular location is the nucleoplasm. The protein resides in the cytoplasm. Involved in intron recognition and spliceosome assembly. Binds to multiple 5'-GAAG-3' repeats found in its third intron, suggesting autoregulation of alternative splicing. May be necessary for accurate splicing of the 3' region of introns. This is Serine/arginine-rich SC35-like splicing factor SCL33 (SCL33) from Arabidopsis thaliana (Mouse-ear cress).